Here is a 209-residue protein sequence, read N- to C-terminus: Protein-L-isoaspartate O-methyltransferase (209 aa).

Ser59 is an active-site residue.

The protein belongs to the methyltransferase superfamily. L-isoaspartyl/D-aspartyl protein methyltransferase family.

It is found in the cytoplasm. The enzyme catalyses [protein]-L-isoaspartate + S-adenosyl-L-methionine = [protein]-L-isoaspartate alpha-methyl ester + S-adenosyl-L-homocysteine. Catalyzes the methyl esterification of L-isoaspartyl residues in peptides and proteins that result from spontaneous decomposition of normal L-aspartyl and L-asparaginyl residues. It plays a role in the repair and/or degradation of damaged proteins. This is Protein-L-isoaspartate O-methyltransferase from Helicobacter pylori (strain G27).